We begin with the raw amino-acid sequence, 501 residues long: Glutamate--tRNA ligase (501 aa).

Positions 10–20 match the 'HIGH' region motif; that stretch reads PSPTGSLHIGG. The 'KMSKS' region signature appears at 251–255; it reads KLSKR. Lys254 lines the ATP pocket.

It belongs to the class-I aminoacyl-tRNA synthetase family. Glutamate--tRNA ligase type 1 subfamily. Monomer.

It localises to the cytoplasm. It catalyses the reaction tRNA(Glu) + L-glutamate + ATP = L-glutamyl-tRNA(Glu) + AMP + diphosphate. In terms of biological role, catalyzes the attachment of glutamate to tRNA(Glu) in a two-step reaction: glutamate is first activated by ATP to form Glu-AMP and then transferred to the acceptor end of tRNA(Glu). This is Glutamate--tRNA ligase from Desulforudis audaxviator (strain MP104C).